Reading from the N-terminus, the 292-residue chain is Ribosomal RNA small subunit methyltransferase A (292 aa).

Residues N29, L31, G56, E77, D102, and N127 each coordinate S-adenosyl-L-methionine.

The protein belongs to the class I-like SAM-binding methyltransferase superfamily. rRNA adenine N(6)-methyltransferase family. RsmA subfamily.

The protein resides in the cytoplasm. The enzyme catalyses adenosine(1518)/adenosine(1519) in 16S rRNA + 4 S-adenosyl-L-methionine = N(6)-dimethyladenosine(1518)/N(6)-dimethyladenosine(1519) in 16S rRNA + 4 S-adenosyl-L-homocysteine + 4 H(+). Functionally, specifically dimethylates two adjacent adenosines (A1518 and A1519) in the loop of a conserved hairpin near the 3'-end of 16S rRNA in the 30S particle. May play a critical role in biogenesis of 30S subunits. This is Ribosomal RNA small subunit methyltransferase A from Bacillus pumilus (strain SAFR-032).